The following is a 370-amino-acid chain: Glucan endo-1,3-beta-glucosidase (370 aa).

The first 32 residues, 1-32, serve as a signal peptide directing secretion; that stretch reads MASFFARTRRFSLVSLFLLELFTINLIPTTDA. Residue Q33 is modified to Pyrrolidone carboxylic acid. Residue E127 is the Proton donor of the active site. Catalysis depends on E272, which acts as the Nucleophile. The propeptide at 348–370 is removed in mature form; that stretch reads GERRDGEIVEGDFNGTVSLKSDM. Residue N361 is glycosylated (N-linked (GlcNAc...) asparagine).

This sequence belongs to the glycosyl hydrolase 17 family. In terms of tissue distribution, constitutively expressed in seedling roots.

It catalyses the reaction Hydrolysis of (1-&gt;3)-beta-D-glucosidic linkages in (1-&gt;3)-beta-D-glucans.. Functionally, implicated in the defense of plants against pathogens. The protein is Glucan endo-1,3-beta-glucosidase of Pisum sativum (Garden pea).